The primary structure comprises 562 residues: MSAMALSSTMALSLPQSSMSLSHCRHNRITILIPSSSLRRRGGSSIRCSTISTSNSAAAANYQNKNIGTNGVDGGGGGGGVLDCVIVGGGISGLCIAQALSTKYSNLSTNFIVTEAKDRVGGNITTMEADGYLWEEGPNSFQPSDAVLTMAVDSGLKEELVLGDPNSPRFVLWNGKLRPVPSKLTDLPFFDLMSFPGKIRAGLGALGLRPSPPAHEESVEQFVRRNLGDEVFERLIEPFCSGVYAGDPSKLSMKAAFGRVWVLEQKGGSIIGGTLKTIQERKDNPKPPRDPRLPKPKGQTVGSFRKGLSMLPTAISERLGNKVKVSWTLSGIAKSSNGEYNLTYETPDGLVSVRTKSVVMTVPSYVASSLLRPLSDVAAESLSKFHYPPVAAVSLSYPKEAIRSECLIDGELKGFGQLHSRSQGVETLGTIYSSSLFPGRAPPGRTLILNYIGGDTNPGILDKTKDELAEAVDRDLRRILINPNAKAPRVLGVRVWPQAIPQFLIGHFDLLDAAKAALTDGGHKGLFLGGNYVSGVALGRCIEGAYESAAEVVDFLSQYSDK.

A chloroplast-targeting transit peptide spans 1–48 (MSAMALSSTMALSLPQSSMSLSHCRHNRITILIPSSSLRRRGGSSIRC). FAD is bound by residues 88–93 (GGGISG), 115–116 (EA), and 137–140 (GPNS). The interval 274–302 (TLKTIQERKDNPKPPRDPRLPKPKGQTVG) is disordered. Basic and acidic residues predominate over residues 278-293 (IQERKDNPKPPRDPRL). FAD is bound by residues valine 323 and 536–538 (VAL).

This sequence belongs to the protoporphyrinogen/coproporphyrinogen oxidase family. Protoporphyrinogen oxidase subfamily. FAD is required as a cofactor.

The protein resides in the plastid. It localises to the chloroplast thylakoid membrane. The protein localises to the chloroplast inner membrane. The enzyme catalyses protoporphyrinogen IX + 3 O2 = protoporphyrin IX + 3 H2O2. It functions in the pathway porphyrin-containing compound metabolism; protoporphyrin-IX biosynthesis; protoporphyrin-IX from protoporphyrinogen-IX: step 1/1. The protein operates within porphyrin-containing compound metabolism; chlorophyll biosynthesis. Functionally, catalyzes the 6-electron oxidation of protoporphyrinogen-IX to form protoporphyrin-IX. In Spinacia oleracea (Spinach), this protein is Protoporphyrinogen oxidase 1, chloroplastic.